The following is an 851-amino-acid chain: DNA mismatch repair protein MutS (851 aa).

ATP is bound at residue 602-609 (GPNMSGKS).

Belongs to the DNA mismatch repair MutS family.

Functionally, this protein is involved in the repair of mismatches in DNA. It is possible that it carries out the mismatch recognition step. This protein has a weak ATPase activity. In Streptococcus pyogenes serotype M12 (strain MGAS2096), this protein is DNA mismatch repair protein MutS.